Reading from the N-terminus, the 967-residue chain is Vitamin B12-dependent ribonucleotide reductase (967 aa).

The disordered stretch occupies residues 1–23 (MTETASGPARSSRAKGTKAGKGL). Substrate is bound by residues Ser-143, 159-160 (AC), Gly-188, 364-368 (NPCSE), and 554-558 (PTGTI). A disulfide bridge connects residues Cys-160 and Cys-377. Asn-364 (proton acceptor) is an active-site residue. Residue Cys-366 is the Cysteine radical intermediate of the active site. The active-site Proton acceptor is the Glu-368.

It belongs to the ribonucleoside diphosphate reductase class-2 family. It depends on adenosylcob(III)alamin as a cofactor.

It carries out the reaction a 2'-deoxyribonucleoside 5'-diphosphate + [thioredoxin]-disulfide + H2O = a ribonucleoside 5'-diphosphate + [thioredoxin]-dithiol. In terms of biological role, catalyzes the reduction of ribonucleotides to deoxyribonucleotides. May function to provide a pool of deoxyribonucleotide precursors for DNA repair during oxygen limitation and/or for immediate growth after restoration of oxygen. This chain is Vitamin B12-dependent ribonucleotide reductase (nrdJ), found in Streptomyces coelicolor (strain ATCC BAA-471 / A3(2) / M145).